A 999-amino-acid chain; its full sequence is MYIQQSQIDVNSTMIKPLKNSNGISNSNINSFSIKNDIDSNINSNSNNIGNGNGNGNNSCNDHKNNNNNNNNRISPTLSSSSSSSSSHTTSPIIPSSKLNSNTTTSTTPTSTTSSTPTTPTITPSSPSVLYKNPMEFDNVFQFKEVLQRVLDSQFQSDWVAIIAKILGYILPNNDIVLRKCQNDEDVKELLSLLRPSSQLFRMIIENFTNDSFQFYFPFDRIPKCVIFDITIKNQSTPKIINQININQYKKDIVVNMFQYFFFAFGLFPDHLNLEMQLLPANLNNNNNNNNNNNSINNTLNSIENKFTRTIHGIPTFSANRQNSGNRLSSSTGFNSQRIFSGSSSSSSSGSSQTDNSLLFNYQQQQYMMSQKTKSIYLRLLSEYMDFFLPFQRSLIDGNLIIDPNRKLMVNHDMSLTFLKIITESLLGHNLLNQSLNILNQFNYSLLSSFKKPTPVYLSTIQTFITYFQCYSYTFNYLSPFSINSPPSSPSPSPITSNGNKSTTATATIIQPILMTPSLGLFFKQREIVSSGLFEYFVSYFERLDPNDQYLPIDKILNIWVGWLTPWDPNTRTSRRISPNVLQKNNKSTSSFQNLLNLTSSFTHSIGVVGNSGGNKNSNIGSASNLLVLNQEYYSKWENYVIEHYYFYSFIFNLLLIRSQSLDITSYLYIFKSILNIFNSPVLKSLLKRISKHDSIIVQQQEQQYQYQYQQQQQYHYQQPQFYQQSQQQQSQQQQQQQQQQQQQQQQQQQQQQQQQQQQQQQQQQQQPQQPSQQQTPSVSSNYIDVSKDILLRLEYQIGFYQIREFINERNLFSELMVSNASRLVDILTLKINQQNQKDYLEVIKSLCTFYDFEEPIIKEKINNTTIINNNPNDINNANNSNNNNNNQSQVLLSPNRNKDGTLNDMGRKQIYDGKVICKPFDSNYPYEKLISQPLVFEKQPITSEEIGIIIKFGYMLTDNSQTRLFIRKLARKKLLFSLVLILAFIWFFFEIYFFFTRK.

Positions 45-128 (NSNNIGNGNG…TPTITPSSPS (84 aa)) are enriched in low complexity. The tract at residues 45–129 (NSNNIGNGNG…PTITPSSPSV (85 aa)) is disordered. Positions 723-767 (YQQSQQQQSQQQQQQQQQQQQQQQQQQQQQQQQQQQQQQQQQQQQ) form a coiled coil. Low complexity predominate over residues 873–887 (NDINNANNSNNNNNN). The interval 873–904 (NDINNANNSNNNNNNQSQVLLSPNRNKDGTLN) is disordered. A helical transmembrane segment spans residues 976–996 (LFSLVLILAFIWFFFEIYFFF).

Its subcellular location is the membrane. This is an uncharacterized protein from Dictyostelium discoideum (Social amoeba).